Consider the following 299-residue polypeptide: ATP phosphoribosyltransferase (299 aa).

This sequence belongs to the ATP phosphoribosyltransferase family. Long subfamily. As to quaternary structure, equilibrium between an active dimeric form, an inactive hexameric form and higher aggregates. Interconversion between the various forms is largely reversible and is influenced by the natural substrates and inhibitors of the enzyme. Requires Mg(2+) as cofactor.

It is found in the cytoplasm. The catalysed reaction is 1-(5-phospho-beta-D-ribosyl)-ATP + diphosphate = 5-phospho-alpha-D-ribose 1-diphosphate + ATP. Its pathway is amino-acid biosynthesis; L-histidine biosynthesis; L-histidine from 5-phospho-alpha-D-ribose 1-diphosphate: step 1/9. Feedback inhibited by histidine. In terms of biological role, catalyzes the condensation of ATP and 5-phosphoribose 1-diphosphate to form N'-(5'-phosphoribosyl)-ATP (PR-ATP). Has a crucial role in the pathway because the rate of histidine biosynthesis seems to be controlled primarily by regulation of HisG enzymatic activity. This is ATP phosphoribosyltransferase from Sodalis glossinidius (strain morsitans).